The following is a 263-amino-acid chain: Probable ABC transporter permease protein ycf63 (263 aa).

The next 5 helical transmembrane spans lie at 43–63 (IVGP…SMVF), 70–89 (EFLY…IAFT), 150–170 (ILSI…AFVM), 188–208 (ISDF…IGFI), and 230–250 (SVVT…YFMF).

The protein belongs to the MlaE permease family.

The protein localises to the plastid. It localises to the chloroplast membrane. Functionally, could be part of an ABC transporter complex. In Pyropia yezoensis (Susabi-nori), this protein is Probable ABC transporter permease protein ycf63 (ycf63).